The chain runs to 229 residues: MTTKNKRVLQKCAYREEFKGDMERSTAATSKLPLEVELSRNSKGLIIILSSPSGTGKSSLAKALLKIDNNLRLSISATTRKPRLGEVEGINYYFKTGLEFEELVKQNKFLEYAKIYDNYYGTPKEYVEMLLNQGLDVLFDIDWQGARSIKKNATNVVTIFVLPPNIEVLEQRLRNRATDNEEAIKLRMQLAQNEISHANEYDYVVTNDDFDRTLKKIHAIIVAARDKAF.

Residues 7–42 (RVLQKCAYREEFKGDMERSTAATSKLPLEVELSRNS) form the RPE1 insert domain. The Guanylate kinase-like domain occupies 44–222 (GLIIILSSPS…TLKKIHAIIV (179 aa)). 51–58 (SPSGTGKS) is an ATP binding site.

This sequence belongs to the guanylate kinase family.

It localises to the cytoplasm. It carries out the reaction GMP + ATP = GDP + ADP. Its function is as follows. Essential for recycling GMP and indirectly, cGMP. The protein is Guanylate kinase (gmk) of Rickettsia conorii (strain ATCC VR-613 / Malish 7).